The primary structure comprises 195 residues: Pyridoxal 5'-phosphate synthase subunit PdxT (195 aa).

An L-glutamine-binding site is contributed by 46–48; sequence GES. Cys78 functions as the Nucleophile in the catalytic mechanism. Residues Arg107 and 135–136 contribute to the L-glutamine site; that span reads IR. Active-site charge relay system residues include His172 and Glu174.

Belongs to the glutaminase PdxT/SNO family. In the presence of PdxS, forms a dodecamer of heterodimers. Only shows activity in the heterodimer.

The catalysed reaction is aldehydo-D-ribose 5-phosphate + D-glyceraldehyde 3-phosphate + L-glutamine = pyridoxal 5'-phosphate + L-glutamate + phosphate + 3 H2O + H(+). It carries out the reaction L-glutamine + H2O = L-glutamate + NH4(+). It functions in the pathway cofactor biosynthesis; pyridoxal 5'-phosphate biosynthesis. Catalyzes the hydrolysis of glutamine to glutamate and ammonia as part of the biosynthesis of pyridoxal 5'-phosphate. The resulting ammonia molecule is channeled to the active site of PdxS. The polypeptide is Pyridoxal 5'-phosphate synthase subunit PdxT (Corynebacterium jeikeium (strain K411)).